A 370-amino-acid polypeptide reads, in one-letter code: Gibberellin 3-beta-dioxygenase 2-1 (370 aa).

One can recognise a Fe2OG dioxygenase domain in the interval 205–306 (MTATMHLNWY…RISLGYFLGP (102 aa)). Residues H229, D231, and H287 each contribute to the Fe cation site. R297 is a catalytic residue.

The protein belongs to the iron/ascorbate-dependent oxidoreductase family. GA3OX subfamily. L-ascorbate is required as a cofactor. The cofactor is Fe cation. Expressed in internodes, nodes and the ear of the elongating stem.

It catalyses the reaction gibberellin A20 + 2-oxoglutarate + O2 = gibberellin A1 + succinate + CO2. Its function is as follows. Converts the inactive gibberellin precursors GA9 and GA20 in the bioactives gibberellins GA4 and GA1. Also accepts GA15, GA44, the 2,3-unsaturated GA5 and 2,3-dihydroGA9 as substrate. No activity with GA12, GA53, GA24, GA19 and GA25. Also possesses 2-beta-hydroxylase, 2,3-desaturase, 2,3-epoxidase and 13-hydroxylase activities. This Triticum aestivum (Wheat) protein is Gibberellin 3-beta-dioxygenase 2-1 (GA3ox2-1).